Consider the following 138-residue polypeptide: Large ribosomal subunit protein bL17 (138 aa).

It belongs to the bacterial ribosomal protein bL17 family. As to quaternary structure, part of the 50S ribosomal subunit. Contacts protein L32.

The sequence is that of Large ribosomal subunit protein bL17 from Phenylobacterium zucineum (strain HLK1).